We begin with the raw amino-acid sequence, 155 residues long: Archaemetzincin (155 aa).

His109 lines the Zn(2+) pocket. Glu110 (proton acceptor) is an active-site residue. Residues His113, His119, Cys120, Cys125, Cys144, and Cys147 each contribute to the Zn(2+) site.

The protein belongs to the peptidase M54 family. Monomer. Requires Zn(2+) as cofactor.

Functionally, probable zinc metalloprotease whose natural substrate is unknown. The protein is Archaemetzincin of Pyrobaculum aerophilum (strain ATCC 51768 / DSM 7523 / JCM 9630 / CIP 104966 / NBRC 100827 / IM2).